A 124-amino-acid chain; its full sequence is uncharacterized protein (124 aa).

Disordered stretches follow at residues 1–31 and 59–124; these read MAQH…TMKP and EDAR…YPQP. Polar residues-rich tracts occupy residues 65–86 and 98–124; these read GMSS…SDAA and TGEQ…YPQP.

This is an uncharacterized protein from Bos taurus (Bovine).